We begin with the raw amino-acid sequence, 191 residues long: Cell number regulator 1 (191 aa).

The interval 13-44 (FSAGAPPTAPPPPAAYHQQQQQHGANMDTSRP) is disordered. Positions 27 to 37 (AYHQQQQQHGA) are enriched in low complexity. The chain crosses the membrane as a helical span at residues 91-113 (IASGLVYGLICASTGMGCLYSCL).

It belongs to the cornifelin family. In terms of tissue distribution, expressed in roots, coleoptiles, stalks and silks. Detected in leaves, apical meristems, immature ears and pericarps. Highest expression in coleoptiles and silks.

It is found in the membrane. Its function is as follows. Acts as a negative regulator of cell number. The protein is Cell number regulator 1 (CNR1) of Zea mays (Maize).